The chain runs to 316 residues: MSFASETKKELTNLDVKDCCTKAELSALIRMNGSLSFSNRKLILDIQTENAAIARRIYTLLKKKYDVTVELLVRKKMRLKKNNVYIVRLVERAKTILEDLKILGEQFVFERNISEELVKKRCCKRSYMRGAFLAGGSVNNPETSSYHLEIFSLYKEHNDALCELMNQFHLNSKTLERKKGYITYMKEAEKITEFLSVVGAHNSLLRFEDVRIVRDMRNSVNRLVNCETANLNKTIGASLRQVENIQFIDEKIGLDALPDKLREIAKLRVDYQEVTLKELGEMVESGKISKSGINHRLRKLDQIAEQLRNGQAVTLK.

Positions 275-309 form a DNA-binding region, H-T-H motif; the sequence is TLKELGEMVESGKISKSGINHRLRKLDQIAEQLRN.

This sequence belongs to the WhiA family.

Its function is as follows. Involved in cell division and chromosome segregation. This Bacillus pumilus (strain SAFR-032) protein is Probable cell division protein WhiA.